A 110-amino-acid polypeptide reads, in one-letter code: METIAKHRYANSSAQKLRLVINLIRGKEVSKALEILTYTNKKAANLVKKVLESAIANAEHNDGADVDDLKIAKIFVDVGPSIKRIMPRAKGRVDHILKRTSHITVVVSDR.

This sequence belongs to the universal ribosomal protein uL22 family. As to quaternary structure, part of the 50S ribosomal subunit.

Its function is as follows. This protein binds specifically to 23S rRNA; its binding is stimulated by other ribosomal proteins, e.g. L4, L17, and L20. It is important during the early stages of 50S assembly. It makes multiple contacts with different domains of the 23S rRNA in the assembled 50S subunit and ribosome. The globular domain of the protein is located near the polypeptide exit tunnel on the outside of the subunit, while an extended beta-hairpin is found that lines the wall of the exit tunnel in the center of the 70S ribosome. The polypeptide is Large ribosomal subunit protein uL22 (Baumannia cicadellinicola subsp. Homalodisca coagulata).